Consider the following 272-residue polypeptide: Shikimate dehydrogenase (NADP(+)) (272 aa).

Shikimate contacts are provided by residues 16 to 18 (SLS) and T63. K67 acts as the Proton acceptor in catalysis. E79 is an NADP(+) binding site. N88 and D103 together coordinate shikimate. Residues 127–131 (GAGGA), 151–156 (NRTMSR), and I212 contribute to the NADP(+) site. Y214 lines the shikimate pocket. G235 provides a ligand contact to NADP(+).

Belongs to the shikimate dehydrogenase family. As to quaternary structure, homodimer.

The catalysed reaction is shikimate + NADP(+) = 3-dehydroshikimate + NADPH + H(+). It functions in the pathway metabolic intermediate biosynthesis; chorismate biosynthesis; chorismate from D-erythrose 4-phosphate and phosphoenolpyruvate: step 4/7. Functionally, involved in the biosynthesis of the chorismate, which leads to the biosynthesis of aromatic amino acids. Catalyzes the reversible NADPH linked reduction of 3-dehydroshikimate (DHSA) to yield shikimate (SA). This chain is Shikimate dehydrogenase (NADP(+)), found in Staphylococcus epidermidis (strain ATCC 12228 / FDA PCI 1200).